A 375-amino-acid polypeptide reads, in one-letter code: ELAV-like protein 2 (375 aa).

3 RRM domains span residues 67 to 145 (TNLI…YARP), 153 to 233 (ANLY…FANN), and 292 to 370 (WCIF…FKTS).

The protein belongs to the RRM elav family. In terms of assembly, part of a ribonucleoprotein (RNP) complex, at least composed of elavl1/elrA and/or elavl2/elrB, igf2bp3/vg1RBP, ddx6/Xp54, ybx2/frgy2, lsm14b/rap55b and, in a subset of RNP complexes, stau1/staufen. Binds RNA as a homooligomer.

The protein resides in the cytoplasm. The protein localises to the cell cortex. Binds to poly-U elements and AU-rich elements (AREs) in the 3'-UTR of target mRNAs. Required for the vegetal localization of vg1 mRNA. Probably required for nervous system development. This Xenopus tropicalis (Western clawed frog) protein is ELAV-like protein 2.